The primary structure comprises 183 residues: MDIDPYKEFGATVELLSFLPSDFFPSVRDLLDTASALYREALESPEHCSPNHTALRQAILCWGELMTLASWVGNNLEDPASREQVVNYVNTNMGLKIRQLLWFHISCLTFGRETVLEYLVSFGVWIRTPPAYRPPNAPILSTLPETAVVRRRGRSPRRRTPSPRRRRSQSPRRRRSQSPASQC.

Residues Leu-143 to Cys-183 form a disordered region. The segment covering Val-149 to Ser-176 has biased composition (basic residues). Residues Ser-155, Ser-162, and Ser-170 each carry the phosphoserine; by host modification. One copy of the 1; half-length repeat lies at Ser-155–Pro-161. The interval Ser-155–Gln-177 is 3 X 8 AA repeats of S-P-R-R-R-[PR]-S-Q. Positions Arg-158 to Arg-175 match the Bipartite nuclear localization signal motif. 2 repeat units span residues Ser-162 to Gln-169 and Ser-170 to Gln-177. An RNA binding region spans residues Gln-177–Cys-183.

Belongs to the orthohepadnavirus core antigen family. Homodimerizes, then multimerizes. Interacts with cytosol exposed regions of viral L glycoprotein present in the reticulum-to-Golgi compartment. Interacts with human FLNB. Phosphorylated form interacts with host importin alpha; this interaction depends on the exposure of the NLS, which itself depends upon genome maturation and/or phosphorylation of the capsid protein. Interacts with host NUP153. Post-translationally, phosphorylated by host SRPK1, SRPK2, and maybe protein kinase C or GAPDH. Phosphorylation is critical for pregenomic RNA packaging. Protein kinase C phosphorylation is stimulated by HBx protein and may play a role in transport of the viral genome to the nucleus at the late step during the viral replication cycle.

It localises to the virion. Its subcellular location is the host cytoplasm. In terms of biological role, self assembles to form an icosahedral capsid. Most capsids appear to be large particles with an icosahedral symmetry of T=4 and consist of 240 copies of capsid protein, though a fraction forms smaller T=3 particles consisting of 180 capsid proteins. Entering capsids are transported along microtubules to the nucleus. Phosphorylation of the capsid is thought to induce exposure of nuclear localization signal in the C-terminal portion of the capsid protein that allows binding to the nuclear pore complex via the importin (karyopherin-) alpha and beta. Capsids are imported in intact form through the nuclear pore into the nuclear basket, where it probably binds NUP153. Only capsids that contain the mature viral genome can release the viral DNA and capsid protein into the nucleoplasm. Immature capsids get stuck in the basket. Capsids encapsulate the pre-genomic RNA and the P protein. Pre-genomic RNA is reverse-transcribed into DNA while the capsid is still in the cytoplasm. The capsid can then either be directed to the nucleus, providing more genomes for transcription, or bud through the endoplasmic reticulum to provide new virions. The polypeptide is Capsid protein (Gorilla gorilla (western gorilla)).